The sequence spans 321 residues: ATP-dependent 6-phosphofructokinase (321 aa).

An ATP-binding site is contributed by glycine 12. ADP-binding positions include 22–26 (RAVVR) and 55–60 (RYSVSD). Residues 73–74 (RF) and 103–106 (GDGS) contribute to the ATP site. A Mg(2+)-binding site is contributed by aspartate 104. 127–129 (TID) lines the substrate pocket. Aspartate 129 acts as the Proton acceptor in catalysis. ADP is bound at residue arginine 156. Substrate-binding positions include arginine 164 and 171–173 (MGR). ADP contacts are provided by residues 187-189 (GCE) and 215-217 (KRH). Residues glutamate 224, arginine 245, and 251–254 (HVQR) each bind substrate.

It belongs to the phosphofructokinase type A (PFKA) family. ATP-dependent PFK group I subfamily. Prokaryotic clade 'B1' sub-subfamily. Homotetramer. Mg(2+) is required as a cofactor.

It localises to the cytoplasm. The enzyme catalyses beta-D-fructose 6-phosphate + ATP = beta-D-fructose 1,6-bisphosphate + ADP + H(+). It functions in the pathway carbohydrate degradation; glycolysis; D-glyceraldehyde 3-phosphate and glycerone phosphate from D-glucose: step 3/4. Allosterically activated by ADP and other diphosphonucleosides, and allosterically inhibited by phosphoenolpyruvate. Its function is as follows. Catalyzes the phosphorylation of D-fructose 6-phosphate to fructose 1,6-bisphosphate by ATP, the first committing step of glycolysis. The chain is ATP-dependent 6-phosphofructokinase from Actinobacillus succinogenes (strain ATCC 55618 / DSM 22257 / CCUG 43843 / 130Z).